The chain runs to 415 residues: Multidrug resistance protein MdtA (415 aa).

Residues 1 to 21 form the signal peptide; it reads MKGSYKSRWVIVIVVVIAAIA. Residues 31 to 47 show a composition bias toward polar residues; it reads DSQSAAPGATKQAQQSP. Disordered regions lie at residues 31–60 and 392–415; these read DSQSAAPGATKQAQQSPAGGRRGMRSGPLA and EAQSATTPEEKATSREYAKKGARS. Basic and acidic residues predominate over residues 399–415; sequence PEEKATSREYAKKGARS.

Belongs to the membrane fusion protein (MFP) (TC 8.A.1) family. As to quaternary structure, part of a tripartite efflux system composed of MdtA, MdtB and MdtC.

It is found in the cell inner membrane. The MdtABC tripartite complex confers resistance against novobiocin and deoxycholate. The chain is Multidrug resistance protein MdtA from Escherichia coli O8 (strain IAI1).